The following is a 183-amino-acid chain: Putative 3-methyladenine DNA glycosylase (183 aa).

Belongs to the DNA glycosylase MPG family.

This chain is Putative 3-methyladenine DNA glycosylase, found in Rickettsia conorii (strain ATCC VR-613 / Malish 7).